We begin with the raw amino-acid sequence, 131 residues long: Small ribosomal subunit protein uS8 (131 aa).

This sequence belongs to the universal ribosomal protein uS8 family. In terms of assembly, part of the 30S ribosomal subunit. Contacts proteins S5 and S12.

Functionally, one of the primary rRNA binding proteins, it binds directly to 16S rRNA central domain where it helps coordinate assembly of the platform of the 30S subunit. This chain is Small ribosomal subunit protein uS8, found in Bacteroides thetaiotaomicron (strain ATCC 29148 / DSM 2079 / JCM 5827 / CCUG 10774 / NCTC 10582 / VPI-5482 / E50).